The following is a 44-amino-acid chain: Large ribosomal subunit protein bL34 (44 aa).

The protein belongs to the bacterial ribosomal protein bL34 family.

This is Large ribosomal subunit protein bL34 from Wolbachia pipientis wMel.